The sequence spans 454 residues: Putative KilA-N domain-containing protein L4 (454 aa).

Residues 1 to 12 are compositionally biased toward basic residues; that stretch reads MPQKTSKSKSSR. The disordered stretch occupies residues 1 to 159; it reads MPQKTSKSKS…DVPEEEYDDN (159 aa). Positions 14 to 64 are enriched in basic and acidic residues; that stretch reads RYIEDSDDETRGRSRNRSIEKSRSRSLDKSQKKSRDKSLTRSRSKSPEKSK. Basic residues predominate over residues 65 to 79; the sequence is SRSKSLTRSRSKSPK. Acidic residues-rich tracts occupy residues 98-123 and 130-158; these read YTTE…DEEL and ESDE…EYDD. The 105-residue stretch at 172–276 folds into the KilA-N domain; it reads EFARGKFGDF…LKVSDIVIEY (105 aa).

This chain is Putative KilA-N domain-containing protein L4, found in Acanthamoeba polyphaga mimivirus (APMV).